Here is an 880-residue protein sequence, read N- to C-terminus: Alanine--tRNA ligase (880 aa).

H567, H571, C669, and H673 together coordinate Zn(2+).

Belongs to the class-II aminoacyl-tRNA synthetase family. Zn(2+) is required as a cofactor.

It is found in the cytoplasm. It catalyses the reaction tRNA(Ala) + L-alanine + ATP = L-alanyl-tRNA(Ala) + AMP + diphosphate. Its function is as follows. Catalyzes the attachment of alanine to tRNA(Ala) in a two-step reaction: alanine is first activated by ATP to form Ala-AMP and then transferred to the acceptor end of tRNA(Ala). Also edits incorrectly charged Ser-tRNA(Ala) and Gly-tRNA(Ala) via its editing domain. This chain is Alanine--tRNA ligase, found in Syntrophomonas wolfei subsp. wolfei (strain DSM 2245B / Goettingen).